Consider the following 512-residue polypeptide: Inositol-3-phosphate synthase (512 aa).

NAD(+) is bound by residues Gly-72, Gly-73, Asn-74, Asn-75, Asp-145, Ile-182, Gln-192, Arg-195, Thr-232, Gly-233, Asn-234, Thr-235, Gly-283, Ser-284, Asp-308, Ser-311, Asn-342, Asn-343, Asp-344, Lys-357, Gly-395, Asp-396, Asp-424, and Ser-425.

It belongs to the myo-inositol 1-phosphate synthase family. NAD(+) is required as a cofactor.

Its subcellular location is the cytoplasm. The protein resides in the cytosol. It localises to the nucleus. The catalysed reaction is D-glucose 6-phosphate = 1D-myo-inositol 3-phosphate. Its pathway is polyol metabolism; myo-inositol biosynthesis; myo-inositol from D-glucose 6-phosphate: step 1/2. Its function is as follows. Key enzyme in myo-inositol biosynthesis pathway that catalyzes the conversion of glucose 6-phosphate to 1-myo-inositol 1-phosphate in a NAD-dependent manner. The polypeptide is Inositol-3-phosphate synthase (Mesembryanthemum crystallinum (Common ice plant)).